The primary structure comprises 190 residues: Guanylate kinase (190 aa).

A Guanylate kinase-like domain is found at 8-188 (GRLVILAGPS…AVKAIEDVLL (181 aa)). Residue 15 to 22 (GPSAVGKS) coordinates ATP.

It belongs to the guanylate kinase family.

The protein resides in the cytoplasm. It carries out the reaction GMP + ATP = GDP + ADP. Functionally, essential for recycling GMP and indirectly, cGMP. The sequence is that of Guanylate kinase from Corynebacterium glutamicum (strain ATCC 13032 / DSM 20300 / JCM 1318 / BCRC 11384 / CCUG 27702 / LMG 3730 / NBRC 12168 / NCIMB 10025 / NRRL B-2784 / 534).